Consider the following 313-residue polypeptide: Porphobilinogen deaminase (313 aa).

The residue at position 242 (C242) is an S-(dipyrrolylmethanemethyl)cysteine.

It belongs to the HMBS family. Monomer. The cofactor is dipyrromethane.

The enzyme catalyses 4 porphobilinogen + H2O = hydroxymethylbilane + 4 NH4(+). It functions in the pathway porphyrin-containing compound metabolism; protoporphyrin-IX biosynthesis; coproporphyrinogen-III from 5-aminolevulinate: step 2/4. In terms of biological role, tetrapolymerization of the monopyrrole PBG into the hydroxymethylbilane pre-uroporphyrinogen in several discrete steps. In Escherichia coli O7:K1 (strain IAI39 / ExPEC), this protein is Porphobilinogen deaminase.